A 136-amino-acid chain; its full sequence is Large ribosomal subunit protein uL16 (136 aa).

Belongs to the universal ribosomal protein uL16 family. In terms of assembly, part of the 50S ribosomal subunit.

Functionally, binds 23S rRNA and is also seen to make contacts with the A and possibly P site tRNAs. This Actinobacillus pleuropneumoniae serotype 5b (strain L20) protein is Large ribosomal subunit protein uL16.